The primary structure comprises 321 residues: Nacrein-like protein (321 aa).

The Alpha-carbonic anhydrase domain maps to 1–319 (RGPKNWCKVH…NKNVIVYRNH (319 aa)). H58 functions as the Proton acceptor in the catalytic mechanism.

This sequence belongs to the alpha-carbonic anhydrase family. Component of the organic matrix of calcified shell layers like nacre and prisms.

It is found in the secreted. This Mytilus californianus (California mussel) protein is Nacrein-like protein.